We begin with the raw amino-acid sequence, 571 residues long: FAD-binding monooxygenase VdtE (571 aa).

Residues 44 to 47 (VWYW), 56 to 57 (DS), and tyrosine 62 contribute to the FAD site. 54-56 (RVD) lines the NADP(+) pocket. NADP(+) is bound by residues 187–193 (TGASAVQ) and 210–211 (RT).

This sequence belongs to the FAD-binding monooxygenase family. FAD is required as a cofactor.

The enzyme catalyses 9,10-dihydroxy-7-methoxy-3-(2-oxopropyl)-1H-benzo[g]isochromen-1-one + NADPH + O2 + H(+) = methyl 2-[(3S)-9,10-dihydroxy-7-methoxy-1-oxo-1H,3H,4H-naphtho[2,3-c]pyran-3-yl]acetate + NADP(+) + H2O. It catalyses the reaction (3S)-9,10-dihydroxy-7-methoxy-3-(2-oxopropyl)-1H,3H,4H-naphtho[2,3-c]pyran-1-one + NADPH + O2 + H(+) = semiviriditoxin + NADP(+) + H2O. The protein operates within secondary metabolite biosynthesis. In terms of biological role, FAD-binding monooxygenase; part of the gene cluster that mediates the biosynthesis of viriditoxin, one of the 'classical' secondary metabolites produced by fungi and that has antibacterial activity. The first step is performed by the polyketide synthase VdtA which condenses one acetyl-CoA and 6 malonyl-CoA units to form the heptaketide monomer backbone of viriditoxin. The product of VdtA is then O-methylated on C7 by the O-methyltransferase VdtC. The O-methyl group is important for the stereoselective coupling of the monomers at the final step of viriditoxin biosynthesis. The short-chain dehydrogenase/reductase VdtF then acts as a stereospecific reductase converting the pyrone to dihydropyrone via the reduction of the C3-C4 double bond. The FAD-binding monooxygenase VdtE then converts the ketone group into a methyl-ester group to yield semi-viriditoxin. Finally, the laccase VdtB is involved in dimerization of 2 semi-viriditoxin molecules to yield the final viriditoxin. VdtB is responsible for the regioselective 6,6'-coupling of semi-viriditoxin, which yields (M)-viriditoxin and (P)-viriditoxin at a ratio of 1:2. The non-catalytic carboxylesterase-like protein VdtD affects the stereochemistical outcome of the coupling. The highly reducing polyketide synthase VdtX is not involved in viriditoxin synthesis, but might possibly play a role in the production of additional metabolites not identified yet. This chain is FAD-binding monooxygenase VdtE, found in Byssochlamys spectabilis (Paecilomyces variotii).